A 182-amino-acid polypeptide reads, in one-letter code: LIM domain-containing protein C (182 aa).

2 LIM zinc-binding domains span residues 3–63 (SICP…LFRQ) and 110–170 (TNCP…KFGP).

The protein localises to the cell projection. It localises to the pseudopodium. It is found in the cytoplasm. The protein resides in the cell cortex. Its subcellular location is the cytoskeleton. Binds to F-actin and may modulate the chemotactic response during early development and contribute to the maintenance of the strength of the actin cytoskeleton. The polypeptide is LIM domain-containing protein C (limC) (Dictyostelium discoideum (Social amoeba)).